A 279-amino-acid chain; its full sequence is Tryptophan synthase alpha chain (279 aa).

Residues E50 and D61 each act as proton acceptor in the active site.

This sequence belongs to the TrpA family. In terms of assembly, tetramer of two alpha and two beta chains.

The enzyme catalyses (1S,2R)-1-C-(indol-3-yl)glycerol 3-phosphate + L-serine = D-glyceraldehyde 3-phosphate + L-tryptophan + H2O. The protein operates within amino-acid biosynthesis; L-tryptophan biosynthesis; L-tryptophan from chorismate: step 5/5. Functionally, the alpha subunit is responsible for the aldol cleavage of indoleglycerol phosphate to indole and glyceraldehyde 3-phosphate. The polypeptide is Tryptophan synthase alpha chain (Rhizobium rhizogenes (strain K84 / ATCC BAA-868) (Agrobacterium radiobacter)).